We begin with the raw amino-acid sequence, 112 residues long: ATP synthase epsilon chain (112 aa).

Belongs to the ATPase epsilon chain family. F-type ATPases have 2 components, CF(1) - the catalytic core - and CF(0) - the membrane proton channel. CF(1) has five subunits: alpha(3), beta(3), gamma(1), delta(1), epsilon(1). CF(0) has three main subunits: a, b and c.

It is found in the cell inner membrane. Its function is as follows. Produces ATP from ADP in the presence of a proton gradient across the membrane. The protein is ATP synthase epsilon chain of Rickettsia peacockii (strain Rustic).